The following is a 687-amino-acid chain: A-kinase anchor protein 8 (687 aa).

Positions methionine 1–phenylalanine 195 are interaction with MCM2. The segment at methionine 1–phenylalanine 210 is interaction with DPY30. The residue at position 72 (serine 72) is a Phosphoserine. Disordered stretches follow at residues lysine 105–serine 124 and glycine 185–proline 218. Arginine 109 bears the Asymmetric dimethylarginine; alternate mark. An Omega-N-methylarginine; alternate modification is found at arginine 109. The span at arginine 109–glycine 118 shows a compositional bias: gly residues. The tract at residues arginine 109–serine 201 is interaction with DDX5. Residue serine 199 is modified to Phosphoserine. Residues arginine 232 and arginine 276 each carry the omega-N-methylarginine modification. The interval serine 277 to aspartate 379 is disordered. Composition is skewed to basic and acidic residues over residues arginine 280–glycine 294 and proline 311–serine 320. Positions arginine 286–lysine 303 match the Bipartite nuclear localization signal motif. Lysine 314 is covalently cross-linked (Glycyl lysine isopeptide (Lys-Gly) (interchain with G-Cter in SUMO2)). Serine 320, serine 325, and serine 336 each carry phosphoserine. Acidic residues predominate over residues aspartate 321–alanine 331. Over residues arginine 335–lysine 357 the composition is skewed to basic and acidic residues. Residues arginine 384–glutamate 447 are involved in chromatin-binding. 2 C2H2 AKAP95-type zinc fingers span residues cysteine 389 to histidine 411 and cysteine 478 to histidine 501. Residues serine 522–threonine 565 are involved in condensin complex recruitment. Threonine 552 carries the post-translational modification Phosphothreonine. The segment at glutamate 568–valine 585 is RII-binding. The required for interaction with MYCBP stretch occupies residues glutamate 572–glycine 589. The disordered stretch occupies residues glutamine 624–serine 659. Residues arginine 633–asparagine 648 are compositionally biased toward basic and acidic residues. Phosphoserine is present on serine 659.

It belongs to the AKAP95 family. In terms of assembly, binds to the PKA RII-alpha regulatory subunit PRKAR2A. Interacts (via C-terminus) with FIGN. Interacts with NCAPD2, CCND3, CCNE1, MCM2, RPS6KA1, DDX5, PDE4A. Interacts with MYCBP; MYCBP is translocated to the nucleus and the interaction prevents the association of the PKA catalytic subunit leading to suppression of PKA activity. Interacts with CCND1, CASP3. Interacts with NFKB1; detetcted in the cytoplasm. Interacts with DPY30; mediating AKAP8 association with at least the MLL4/WBP7 HMT complex. Interacts with HDAC3; increased during mitosis. Interacts with GJA1; in the nucleus and in the nuclear membrane; the nuclear association increases with progress of cell cycle G1, S and G2 phase and decreases in M phase. In terms of processing, phosphorylated on tyrosine residues probably by SRC subfamily protein kinases; multiple phosphorylation is leading to dissociation from nuclear structures implicated in chromatin structural changes.

The protein localises to the nucleus matrix. The protein resides in the nucleus. It localises to the nucleolus. It is found in the cytoplasm. In terms of biological role, anchoring protein that mediates the subcellular compartmentation of cAMP-dependent protein kinase (PKA type II). Acts as an anchor for a PKA-signaling complex onto mitotic chromosomes, which is required for maintenance of chromosomes in a condensed form throughout mitosis. Recruits condensin complex subunit NCAPD2 to chromosomes required for chromatin condensation; the function appears to be independent from PKA-anchoring. Specifically involved in recruitment of CAPD2 to, and condensation of maternal but not paternal chromosomes. May help to deliver cyclin D/E to CDK4 to facilitate cell cycle progression. Required for cell cycle G2/M transition and histone deacetylation during mitosis. In mitotic cells recruits HDAC3 to the vicinity of chromatin leading to deacetylation and subsequent phosphorylation at 'Ser-10' of histone H3; in this function may act redundantly with AKAP8L. Involved in nuclear retention of RPS6KA1 upon ERK activation thus inducing cell proliferation. May be involved in regulation of DNA replication by acting as scaffold for MCM2. Enhances HMT activity of the KMT2 family MLL4/WBP7 complex and is involved in transcriptional regulation. In a teratocarcinoma cell line is involved in retinoic acid-mediated induction of developmental genes implicating H3 'Lys-4' methylation. May be involved in recruitment of active CASP3 to the nucleus in apoptotic cells. May act as a carrier protein of GJA1 for its transport to the nucleus. May play a repressive role in the regulation of rDNA transcription. Preferentially binds GC-rich DNA in vitro. In cells, associates with ribosomal RNA (rRNA) chromatin, preferentially with rRNA promoter and transcribed regions. Involved in modulation of Toll-like receptor signaling. Required for the cAMP-dependent suppression of TNF-alpha in early stages of LPS-induced macrophage activation; the function probably implicates targeting of PKA to NFKB1. This chain is A-kinase anchor protein 8 (Akap8), found in Mus musculus (Mouse).